The primary structure comprises 273 residues: ATP synthase subunit a (273 aa).

Helical transmembrane passes span 42-62, 102-122, 148-168, 213-233, and 244-264; these read TLNI…LFIF, VIAP…MMDL, DVSI…FYSI, LFGN…LLPW, and AIFH…LTIV.

This sequence belongs to the ATPase A chain family. As to quaternary structure, F-type ATPases have 2 components, CF(1) - the catalytic core - and CF(0) - the membrane proton channel. CF(1) has five subunits: alpha(3), beta(3), gamma(1), delta(1), epsilon(1). CF(0) has three main subunits: a(1), b(2) and c(9-12). The alpha and beta chains form an alternating ring which encloses part of the gamma chain. CF(1) is attached to CF(0) by a central stalk formed by the gamma and epsilon chains, while a peripheral stalk is formed by the delta and b chains.

The protein localises to the cell inner membrane. Functionally, key component of the proton channel; it plays a direct role in the translocation of protons across the membrane. In Serratia proteamaculans (strain 568), this protein is ATP synthase subunit a.